The primary structure comprises 410 residues: Mating-type locus allele B6 protein (410 aa).

A variable domain between B alleles region spans residues 1–110; that stretch reads MSRDPKLSLS…VNVASPAVEY (110 aa). The homeobox; TALE-type DNA-binding region spans 107-184; it reads AVEYRNLSED…NARRRSGWSH (78 aa). The highly conserved between B alleles stretch occupies residues 111–410; it reads RNLSEDLPAY…PFFCLSIAFV (300 aa). 3 disordered regions span residues 202–224, 278–335, and 373–393; these read RAKL…PSDD, TPKP…TPEL, and KARG…QQPD. Polar residues predominate over residues 205-219; it reads LSSSNQSTPPSLTSE. The Nuclear localization signal motif lies at 276 to 308; sequence KKTPKPGMPRPVTTVAKRQPARKTKPAAKPKSR. A compositionally biased stretch (basic residues) spans 294–307; the sequence is QPARKTKPAAKPKS. Residues 312–335 show a composition bias toward polar residues; that stretch reads PRASTTPSIDSTLDSSKLESTPEL. Residues 333–410 form a not essential for B6 function region; sequence PELSMCSTAD…PFFCLSIAFV (78 aa). Residues 375-388 show a composition bias toward basic residues; that stretch reads RGNRKVKALPKRAG.

It belongs to the TALE/M-ATYP homeobox family.

It localises to the nucleus. The B locus has at least 25 alleles, and any combination of two different B alleles yields a multimeric regulatory protein, that activates genes responsible for the pathogenicity and for the sexual development of the fungus within the corn plant. This chain is Mating-type locus allele B6 protein, found in Mycosarcoma maydis (Corn smut fungus).